The sequence spans 589 residues: 2-succinyl-5-enolpyruvyl-6-hydroxy-3-cyclohexene-1-carboxylate synthase (589 aa).

A disordered region spans residues 198–222; the sequence is DAATTEGAHDSHAPSQPTRGPRKLP.

This sequence belongs to the TPP enzyme family. MenD subfamily. As to quaternary structure, homodimer. It depends on Mg(2+) as a cofactor. The cofactor is Mn(2+). Thiamine diphosphate serves as cofactor.

The enzyme catalyses isochorismate + 2-oxoglutarate + H(+) = 5-enolpyruvoyl-6-hydroxy-2-succinyl-cyclohex-3-ene-1-carboxylate + CO2. It participates in quinol/quinone metabolism; 1,4-dihydroxy-2-naphthoate biosynthesis; 1,4-dihydroxy-2-naphthoate from chorismate: step 2/7. Its pathway is quinol/quinone metabolism; menaquinone biosynthesis. Its function is as follows. Catalyzes the thiamine diphosphate-dependent decarboxylation of 2-oxoglutarate and the subsequent addition of the resulting succinic semialdehyde-thiamine pyrophosphate anion to isochorismate to yield 2-succinyl-5-enolpyruvyl-6-hydroxy-3-cyclohexene-1-carboxylate (SEPHCHC). This Corynebacterium jeikeium (strain K411) protein is 2-succinyl-5-enolpyruvyl-6-hydroxy-3-cyclohexene-1-carboxylate synthase.